The sequence spans 115 residues: uncharacterized protein (115 aa).

Positions 1 to 26 (MNFKKTVVSALSISALALSVSGVASA) are cleaved as a signal peptide. Positions 36–114 (VKNISISPTH…AVFGKVYVTV (79 aa)) constitute a BIG2 domain.

This is an uncharacterized protein from Bacillus subtilis (strain 168).